The following is a 329-amino-acid chain: Indolepyruvate C-methyltransferase (329 aa).

Belongs to the methyltransferase superfamily.

The catalysed reaction is indole-3-pyruvate + S-adenosyl-L-methionine = (R)-3-(indol-3-yl)-2-oxobutanoate + S-adenosyl-L-homocysteine + H(+). Its activity is regulated as follows. Strongly inhibited by the thiol reagents p-chloromercuribenzoate and N-ethylmaleimide. Partially inhibited by o-phenanthroline and 2,2'-dipyridyl. Competitively inhibited by L-tryptophan and indolmycin. In terms of biological role, involved in the biosynthesis of the antibiotic indolmycin, an inhibitor of the bacterial tryptophan-tRNA synthetases. Catalyzes the transfer of a methyl group from S-adenosyl-L-methionine to position 3 of the aliphatic side chain of (indol-3-yl)pyruvate to yield 3-methylindolepyruvate. This is Indolepyruvate C-methyltransferase from Streptomyces griseus.